We begin with the raw amino-acid sequence, 218 residues long: Glycerol-3-phosphate acyltransferase (218 aa).

6 helical membrane-spanning segments follow: residues 3-23, 53-73, 82-102, 112-132, 142-162, and 166-186; these read FAIF…YWIA, GFPV…LSGI, FQLA…FLGF, LGVF…VFLV, IGSI…SILL, and EVSY…ILTH.

The protein belongs to the PlsY family. In terms of assembly, probably interacts with PlsX.

The protein resides in the cell inner membrane. It catalyses the reaction an acyl phosphate + sn-glycerol 3-phosphate = a 1-acyl-sn-glycero-3-phosphate + phosphate. The protein operates within lipid metabolism; phospholipid metabolism. Its function is as follows. Catalyzes the transfer of an acyl group from acyl-phosphate (acyl-PO(4)) to glycerol-3-phosphate (G3P) to form lysophosphatidic acid (LPA). This enzyme utilizes acyl-phosphate as fatty acyl donor, but not acyl-CoA or acyl-ACP. The chain is Glycerol-3-phosphate acyltransferase from Leptospira borgpetersenii serovar Hardjo-bovis (strain JB197).